The chain runs to 164 residues: UPF0304 protein ESA_00925 (164 aa).

This sequence belongs to the UPF0304 family.

This chain is UPF0304 protein ESA_00925, found in Cronobacter sakazakii (strain ATCC BAA-894) (Enterobacter sakazakii).